The primary structure comprises 74 residues: RNA-binding protein Hfq (74 aa).

The 61-residue stretch at 9 to 69 (DQFLNQLRKE…ISTFAPQKNV (61 aa)) folds into the Sm domain.

This sequence belongs to the Hfq family. Homohexamer.

RNA chaperone that binds small regulatory RNA (sRNAs) and mRNAs to facilitate mRNA translational regulation in response to envelope stress, environmental stress and changes in metabolite concentrations. Also binds with high specificity to tRNAs. This Anoxybacillus flavithermus (strain DSM 21510 / WK1) protein is RNA-binding protein Hfq.